We begin with the raw amino-acid sequence, 89 residues long: MALTQERKNEIINEFKTHENDTGSPEVQVAILTEQINTLNEHLRTHKKDHHSRRGLLKMVGQRRNLLTYLRNKDVTRYRNLVDKLGLRR.

Belongs to the universal ribosomal protein uS15 family. Part of the 30S ribosomal subunit. Forms a bridge to the 50S subunit in the 70S ribosome, contacting the 23S rRNA.

Functionally, one of the primary rRNA binding proteins, it binds directly to 16S rRNA where it helps nucleate assembly of the platform of the 30S subunit by binding and bridging several RNA helices of the 16S rRNA. Its function is as follows. Forms an intersubunit bridge (bridge B4) with the 23S rRNA of the 50S subunit in the ribosome. The protein is Small ribosomal subunit protein uS15 of Halalkalibacterium halodurans (strain ATCC BAA-125 / DSM 18197 / FERM 7344 / JCM 9153 / C-125) (Bacillus halodurans).